The chain runs to 113 residues: Mitochondrial import inner membrane translocase subunit PAM16 like 1 (113 aa).

Residues 1-48 constitute a mitochondrion transit peptide; that stretch reads MAARVLASVIVMGSGIIARACTQAYRQALANASKTGVAHEATQTIKRG. Residues 55–104 form a J-like region; that stretch reads EARQILGVTEKSSWDEILKKYDTLFERNAQNGSFYLQSKVHRAKECLETA.

Belongs to the TIM16/PAM16 family. As to expression, expressed at low levels in seedlings, rosettes and inflorescence.

The protein localises to the mitochondrion inner membrane. Regulates ATP-dependent protein translocation into the mitochondrial matrix. This is Mitochondrial import inner membrane translocase subunit PAM16 like 1 from Arabidopsis thaliana (Mouse-ear cress).